A 228-amino-acid polypeptide reads, in one-letter code: 2,3-bisphosphoglycerate-dependent phosphoglycerate mutase (228 aa).

Substrate-binding positions include Arg-8–Asn-15, Thr-21–Gly-22, Arg-60, Glu-87–Tyr-90, Lys-98, Arg-114–Arg-115, and Gly-183–Asn-184. The Tele-phosphohistidine intermediate role is filled by His-9. The active-site Proton donor/acceptor is the Glu-87.

The protein belongs to the phosphoglycerate mutase family. BPG-dependent PGAM subfamily.

It catalyses the reaction (2R)-2-phosphoglycerate = (2R)-3-phosphoglycerate. It functions in the pathway carbohydrate degradation; glycolysis; pyruvate from D-glyceraldehyde 3-phosphate: step 3/5. Its function is as follows. Catalyzes the interconversion of 2-phosphoglycerate and 3-phosphoglycerate. The polypeptide is 2,3-bisphosphoglycerate-dependent phosphoglycerate mutase (Staphylococcus aureus (strain MRSA252)).